We begin with the raw amino-acid sequence, 362 residues long: Zinc phosphodiesterase ELAC protein 1 (362 aa).

Zn(2+) is bound by residues histidine 62, histidine 64, aspartate 66, histidine 67, histidine 181, aspartate 252, and histidine 312. The active-site Proton acceptor is aspartate 66.

Belongs to the RNase Z family. Homodimer. Requires Zn(2+) as cofactor.

The protein localises to the cytoplasm. It is found in the cytosol. The protein resides in the nucleus. The catalysed reaction is Endonucleolytic cleavage of RNA, removing extra 3' nucleotides from tRNA precursor, generating 3' termini of tRNAs. A 3'-hydroxy group is left at the tRNA terminus and a 5'-phosphoryl group is left at the trailer molecule.. Functionally, zinc phosphodiesterase, which displays some tRNA 3'-processing endonuclease activity. Specifically involved in tRNA repair: acts downstream of the ribosome-associated quality control (RQC) pathway by removing a 2',3'-cyclic phosphate from tRNAs following cleavage by ANKZF1. tRNAs are then processed by TRNT1. This chain is Zinc phosphodiesterase ELAC protein 1 (Elac1), found in Mus musculus (Mouse).